Consider the following 422-residue polypeptide: Glutamate-1-semialdehyde 2,1-aminomutase (422 aa).

Residue Lys-264 is modified to N6-(pyridoxal phosphate)lysine.

This sequence belongs to the class-III pyridoxal-phosphate-dependent aminotransferase family. HemL subfamily. As to quaternary structure, homodimer. Requires pyridoxal 5'-phosphate as cofactor.

It is found in the cytoplasm. The enzyme catalyses (S)-4-amino-5-oxopentanoate = 5-aminolevulinate. It functions in the pathway porphyrin-containing compound metabolism; protoporphyrin-IX biosynthesis; 5-aminolevulinate from L-glutamyl-tRNA(Glu): step 2/2. This Clostridium acetobutylicum (strain ATCC 824 / DSM 792 / JCM 1419 / IAM 19013 / LMG 5710 / NBRC 13948 / NRRL B-527 / VKM B-1787 / 2291 / W) protein is Glutamate-1-semialdehyde 2,1-aminomutase.